Consider the following 134-residue polypeptide: Two-component response regulator ORR5 (134 aa).

The region spanning 16–133 (HVLAVDDSSV…DVSRLCSRVL (118 aa)) is the Response regulatory domain. The residue at position 66 (Asp66) is a 4-aspartylphosphate.

The protein belongs to the ARR family. Type-A subfamily. In terms of processing, two-component system major event consists of a His-to-Asp phosphorelay between a sensor histidine kinase (HK) and a response regulator (RR). In plants, the His-to-Asp phosphorelay involves an additional intermediate named Histidine-containing phosphotransfer protein (HPt). This multistep phosphorelay consists of a His-Asp-His-Asp sequential transfer of a phosphate group between first a His and an Asp of the HK protein, followed by the transfer to a conserved His of the HPt protein and finally the transfer to an Asp in the receiver domain of the RR protein. In terms of tissue distribution, expressed in mature leaves and shoots, and at low levels in roots and flowers.

In terms of biological role, functions as a response regulator involved in His-to-Asp phosphorelay signal transduction system. Phosphorylation of the Asp residue in the receiver domain activates the ability of the protein to promote the transcription of target genes. Type-A response regulators seem to act as negative regulators of the cytokinin signaling. The chain is Two-component response regulator ORR5 from Oryza sativa subsp. indica (Rice).